Consider the following 797-residue polypeptide: Leucine-rich repeat-containing protein AAC1 (797 aa).

Over residues 1–12 the composition is skewed to basic and acidic residues; that stretch reads MKRTSNRNEEAT. Disordered regions lie at residues 1–20, 51–103, 125–148, and 307–333; these read MKRT…SSTT, YSLF…TTTT, NLPT…TTTT, and HSTS…TITA. The span at 55-81 shows a compositional bias: polar residues; the sequence is NEPNNDNDTNSSTRPNKQQKLLKSNES. The segment covering 82–103 has biased composition (low complexity); sequence TTSTTTTTTPITTTTTTTTTTT. Residues 313 to 326 show a composition bias toward pro residues; that stretch reads SSPPPPPPPPPPQI. LRR repeat units lie at residues 376 to 397, 406 to 425, 435 to 456, 464 to 484, 492 to 513, 514 to 535, 543 to 564, 572 to 593, 601 to 622, and 633 to 653; these read KLKK…DFFS, TLET…QLLS, VLKR…YLNK, QLET…IMMK, SLKE…DFGK, SITS…KGLS, SITS…KSLS, TLKF…DHLV, SIHS…TLSQ, and PFKY…KKLI.

This is Leucine-rich repeat-containing protein AAC1 (AAC1) from Dictyostelium discoideum (Social amoeba).